The sequence spans 374 residues: Outer membrane protein assembly factor BamC (374 aa).

An N-terminal signal peptide occupies residues 1 to 22 (MSKFYKSGRVTTAVIVALSLSA). A lipid anchor (N-palmitoyl cysteine) is attached at Cys-23. The S-diacylglycerol cysteine moiety is linked to residue Cys-23.

It belongs to the BamC family. Part of the Bam complex.

The protein resides in the cell outer membrane. Its function is as follows. Part of the outer membrane protein assembly complex, which is involved in assembly and insertion of beta-barrel proteins into the outer membrane. This chain is Outer membrane protein assembly factor BamC, found in Psychromonas ingrahamii (strain DSM 17664 / CCUG 51855 / 37).